The sequence spans 156 residues: Ribosomal RNA large subunit methyltransferase H (156 aa).

S-adenosyl-L-methionine is bound by residues Leu-73, Gly-104, and 123 to 128 (LSALTL).

It belongs to the RNA methyltransferase RlmH family. In terms of assembly, homodimer.

It localises to the cytoplasm. The enzyme catalyses pseudouridine(1915) in 23S rRNA + S-adenosyl-L-methionine = N(3)-methylpseudouridine(1915) in 23S rRNA + S-adenosyl-L-homocysteine + H(+). In terms of biological role, specifically methylates the pseudouridine at position 1915 (m3Psi1915) in 23S rRNA. The chain is Ribosomal RNA large subunit methyltransferase H from Shewanella loihica (strain ATCC BAA-1088 / PV-4).